The chain runs to 592 residues: Frizzled-5 (592 aa).

The N-terminal stretch at Met1 to Ser38 is a signal peptide. Over Ala39–Trp248 the chain is Extracellular. One can recognise an FZ domain in the interval Ser40 to Arg161. 5 disulfide bridges follow: Cys45–Cys106, Cys53–Cys99, Cys90–Cys128, Cys117–Cys158, and Cys121–Cys145. Positions Asn162–Pro192 are disordered. The chain crosses the membrane as a helical span at residues Ile249–Ile269. Over Asp270–Pro280 the chain is Cytoplasmic. Residues Ile281 to Ala301 traverse the membrane as a helical segment. At Gly302–Cys327 the chain is on the extracellular side. Residues Thr328–Leu348 form a helical membrane-spanning segment. The Cytoplasmic portion of the chain corresponds to Ser349–Gln370. The helical transmembrane segment at Tyr371–Ser391 threads the bilayer. Topologically, residues Ser392–Gly414 are extracellular. Residues Phe415–Phe435 form a helical membrane-spanning segment. Residues Val436 to Arg461 are Cytoplasmic-facing. Residues Ile462–Tyr482 traverse the membrane as a helical segment. The Extracellular segment spans residues Glu483–Ala512. The chain crosses the membrane as a helical span at residues Val513–Trp533. Residues Ser534–Val592 are Cytoplasmic-facing.

The protein belongs to the G-protein coupled receptor Fz/Smo family.

It is found in the cell membrane. The protein resides in the golgi apparatus membrane. Its subcellular location is the synapse. It localises to the perikaryon. The protein localises to the cell projection. It is found in the dendrite. The protein resides in the axon. Its function is as follows. Receptor for Wnt proteins. Following binding, activates the canonical Wnt/beta-catenin signaling pathway. Also activates wnt non-canonical signaling. In neurons, activation of the Wnt pathway promotes formation of synapses. May be involved in transduction and intercellular transmission of polarity information during tissue morphogenesis and/or in differentiated tissues. Plays a role in early eye development, possibly through wnt non-canonical signaling. As a receptor for wnt11, promotes eye formation, at least partially, by antagonizing the Wnt/beta-catenin pathway. In addition, promotes coherence of eye field cells, potentially contributing to the coordinated morphogenetic behaviors of cells in the nascent eye field. The chain is Frizzled-5 (fzd5) from Danio rerio (Zebrafish).